A 697-amino-acid chain; its full sequence is Transmembrane protein 168 (697 aa).

The next 3 helical transmembrane spans lie at 36–56, 63–83, and 89–109; these read LGYL…YVRW, LILV…ILYY, and AASL…LCFL. N111 carries N-linked (GlcNAc...) asparagine glycosylation. A run of 5 helical transmembrane segments spans residues 172-192, 199-219, 223-243, 265-285, and 293-313; these read MLVE…MLII, FLAI…SLET, PIAF…DIYF, LSVL…AFKL, and FVIP…IIFL. N-linked (GlcNAc...) asparagine glycosylation is present at N337. 2 consecutive transmembrane segments (helical) span residues 352–372 and 380–400; these read FCLI…ILGA and GIFL…HGLF. 2 N-linked (GlcNAc...) asparagine glycosylation sites follow: N533 and N598.

The protein belongs to the TMEM168 family.

The protein localises to the nucleus membrane. Functionally, plays a key role in maintaining the cardiac electrical stability by modulating cell surface expression of SCN5A. Plays a role i the modulation of anxiety behavior by regulating GABAergic neuronal system in the nucleus accumbens. The chain is Transmembrane protein 168 (Tmem168) from Mus musculus (Mouse).